Consider the following 142-residue polypeptide: Trafficking protein particle complex subunit 1 (142 aa).

The protein belongs to the TRAPP small subunits family. BET5 subfamily. As to quaternary structure, part of the multisubunit TRAPP (transport protein particle) complex.

Its subcellular location is the golgi apparatus. It localises to the cis-Golgi network. The protein localises to the endoplasmic reticulum. Functionally, may play a role in vesicular transport from endoplasmic reticulum to Golgi. The protein is Trafficking protein particle complex subunit 1 (trappc1-1) of Dictyostelium discoideum (Social amoeba).